Reading from the N-terminus, the 109-residue chain is Parvalbumin beta 2 (109 aa).

A2 is subject to N-acetylalanine. EF-hand domains are found at residues 39–74 and 78–109; these read KSPA…FSAG and LSDA…MIKA. Residues D52, D54, S56, F58, E60, E63, D91, D93, D95, K97, and E102 each contribute to the Ca(2+) site.

It belongs to the parvalbumin family. As to quaternary structure, monomer.

Its function is as follows. In muscle, parvalbumin is thought to be involved in relaxation after contraction. It binds two calcium ions. The protein is Parvalbumin beta 2 of Gadus morhua (Atlantic cod).